The sequence spans 201 residues: Ribosomal RNA large subunit methyltransferase E (201 aa).

5 residues coordinate S-adenosyl-L-methionine: Gly-49, Trp-51, Asp-69, Asp-87, and Asp-111. The active-site Proton acceptor is the Lys-151.

It belongs to the class I-like SAM-binding methyltransferase superfamily. RNA methyltransferase RlmE family.

It is found in the cytoplasm. The enzyme catalyses uridine(2552) in 23S rRNA + S-adenosyl-L-methionine = 2'-O-methyluridine(2552) in 23S rRNA + S-adenosyl-L-homocysteine + H(+). Functionally, specifically methylates the uridine in position 2552 of 23S rRNA at the 2'-O position of the ribose in the fully assembled 50S ribosomal subunit. This chain is Ribosomal RNA large subunit methyltransferase E, found in Nitratidesulfovibrio vulgaris (strain DSM 19637 / Miyazaki F) (Desulfovibrio vulgaris).